The sequence spans 333 residues: 4-hydroxy-3-methylbut-2-enyl diphosphate reductase (333 aa).

Position 34 (Cys34) interacts with [4Fe-4S] cluster. (2E)-4-hydroxy-3-methylbut-2-enyl diphosphate contacts are provided by His63 and His96. His63 and His96 together coordinate dimethylallyl diphosphate. Residues His63 and His96 each coordinate isopentenyl diphosphate. Position 118 (Cys118) interacts with [4Fe-4S] cluster. (2E)-4-hydroxy-3-methylbut-2-enyl diphosphate is bound at residue His146. Residue His146 coordinates dimethylallyl diphosphate. His146 contacts isopentenyl diphosphate. Residue Glu148 is the Proton donor of the active site. Thr186 serves as a coordination point for (2E)-4-hydroxy-3-methylbut-2-enyl diphosphate. Cys216 serves as a coordination point for [4Fe-4S] cluster. Positions 244, 245, 246, and 289 each coordinate (2E)-4-hydroxy-3-methylbut-2-enyl diphosphate. 4 residues coordinate dimethylallyl diphosphate: Ser244, Ser245, Asn246, and Ser289. Positions 244, 245, 246, and 289 each coordinate isopentenyl diphosphate.

Belongs to the IspH family. [4Fe-4S] cluster serves as cofactor.

The catalysed reaction is isopentenyl diphosphate + 2 oxidized [2Fe-2S]-[ferredoxin] + H2O = (2E)-4-hydroxy-3-methylbut-2-enyl diphosphate + 2 reduced [2Fe-2S]-[ferredoxin] + 2 H(+). The enzyme catalyses dimethylallyl diphosphate + 2 oxidized [2Fe-2S]-[ferredoxin] + H2O = (2E)-4-hydroxy-3-methylbut-2-enyl diphosphate + 2 reduced [2Fe-2S]-[ferredoxin] + 2 H(+). It functions in the pathway isoprenoid biosynthesis; dimethylallyl diphosphate biosynthesis; dimethylallyl diphosphate from (2E)-4-hydroxy-3-methylbutenyl diphosphate: step 1/1. It participates in isoprenoid biosynthesis; isopentenyl diphosphate biosynthesis via DXP pathway; isopentenyl diphosphate from 1-deoxy-D-xylulose 5-phosphate: step 6/6. Functionally, catalyzes the conversion of 1-hydroxy-2-methyl-2-(E)-butenyl 4-diphosphate (HMBPP) into a mixture of isopentenyl diphosphate (IPP) and dimethylallyl diphosphate (DMAPP). Acts in the terminal step of the DOXP/MEP pathway for isoprenoid precursor biosynthesis. The chain is 4-hydroxy-3-methylbut-2-enyl diphosphate reductase from Mycobacterium sp. (strain KMS).